The following is a 502-amino-acid chain: Pentatricopeptide repeat-containing protein At4g01990, mitochondrial (502 aa).

A mitochondrion-targeting transit peptide spans 1 to 13 (MMHSVSRLARRFC). 7 PPR repeats span residues 139–173 (NQSTYGSLLNCYCVEKEEVKAKAHFENMVDLNHVS), 174–208 (NSLPFNNLMAMYMGLGQPEKVPALVVAMKEKSITP), 209–243 (CDITYSMWIQSCGSLKDLDGVEKVLDEMKAEGEGI), 245–275 (SWNTFANLAAIYIKVGLYGKAEEALKSLENN), 280–310 (VRDCYHFLINLYTGIANASEVYRVWDLLKKR), 315–345 (NNSSYLTMLRALSKLDDIDGVKKVFAEWEST), and 350–381 (DMRMANVAISSYLKQNMYEEAEAVFNGAMKKC).

The protein belongs to the PPR family. P subfamily.

It is found in the mitochondrion. In Arabidopsis thaliana (Mouse-ear cress), this protein is Pentatricopeptide repeat-containing protein At4g01990, mitochondrial.